A 346-amino-acid chain; its full sequence is Histidinol-phosphate aminotransferase (346 aa).

Position 209 is an N6-(pyridoxal phosphate)lysine (Lys-209).

The protein belongs to the class-II pyridoxal-phosphate-dependent aminotransferase family. Histidinol-phosphate aminotransferase subfamily. As to quaternary structure, homodimer. The cofactor is pyridoxal 5'-phosphate.

It catalyses the reaction L-histidinol phosphate + 2-oxoglutarate = 3-(imidazol-4-yl)-2-oxopropyl phosphate + L-glutamate. Its pathway is amino-acid biosynthesis; L-histidine biosynthesis; L-histidine from 5-phospho-alpha-D-ribose 1-diphosphate: step 7/9. In Vibrio cholerae serotype O1 (strain ATCC 39315 / El Tor Inaba N16961), this protein is Histidinol-phosphate aminotransferase.